The primary structure comprises 315 residues: DNA-directed RNA polymerase subunit alpha (315 aa).

An alpha N-terminal domain (alpha-NTD) region spans residues 1-228 (MAQFQIECVE…DLFNPLKDIS (228 aa)). Residues 238–315 (IPDDPTAQIP…LPQERSSKHS (78 aa)) form an alpha C-terminal domain (alpha-CTD) region.

Belongs to the RNA polymerase alpha chain family. In terms of assembly, in cyanobacteria the RNAP catalytic core is composed of 2 alpha, 1 beta, 1 beta', 1 gamma and 1 omega subunit. When a sigma factor is associated with the core the holoenzyme is formed, which can initiate transcription.

It carries out the reaction RNA(n) + a ribonucleoside 5'-triphosphate = RNA(n+1) + diphosphate. Its function is as follows. DNA-dependent RNA polymerase catalyzes the transcription of DNA into RNA using the four ribonucleoside triphosphates as substrates. This chain is DNA-directed RNA polymerase subunit alpha, found in Trichormus variabilis (strain ATCC 29413 / PCC 7937) (Anabaena variabilis).